The chain runs to 58 residues: Small ribosomal subunit protein bS21 (58 aa).

This sequence belongs to the bacterial ribosomal protein bS21 family.

This Synechococcus sp. (strain CC9605) protein is Small ribosomal subunit protein bS21.